Here is a 212-residue protein sequence, read N- to C-terminus: Endothelin-1 (212 aa).

A signal peptide spans 1-17 (MDYLLMIFSLLFVACQG). A propeptide spanning residues 18–50 (APETAVLGAELSAVGENGGEKPTPSPPWRLRRS) is cleaved from the precursor. 2 disulfides stabilise this stretch: C53/C67 and C55/C63. Positions 74–212 (VNTPEHVVPY…RYVTHNRAHW (139 aa)) are excised as a propeptide. An endothelin-like region spans residues 109–123 (CQCASQKDKKCWNFC). 2 stretches are compositionally biased toward basic and acidic residues: residues 168 to 181 (RSSEEHLRQTRSET) and 189 to 205 (SFHDPKLKGKPSRERYV). The disordered stretch occupies residues 168–212 (RSSEEHLRQTRSETMRNSVKSSFHDPKLKGKPSRERYVTHNRAHW).

The protein belongs to the endothelin/sarafotoxin family. In terms of tissue distribution, expressed in lung, placental stem villi vessels and in cultured placental vascular smooth muscle cells.

The protein localises to the secreted. In terms of biological role, endothelins are endothelium-derived vasoconstrictor peptides. Probable ligand for G-protein coupled receptors EDNRA and EDNRB which activates PTK2B, BCAR1, BCAR3 and, GTPases RAP1 and RHOA cascade in glomerular mesangial cells. Also binds the DEAR/FBXW7-AS1 receptor. Promotes mesenteric arterial wall remodeling via activation of ROCK signaling and subsequent colocalization of NFATC3 with F-actin filaments. NFATC3 then translocates to the nucleus where it subsequently promotes the transcription of the smooth muscle hypertrophy and differentiation marker ACTA2. The protein is Endothelin-1 (EDN1) of Homo sapiens (Human).